The chain runs to 248 residues: E3 SUMO-protein ligase NSE2 (248 aa).

Residue methionine 1 is modified to N-acetylmethionine. Glycyl lysine isopeptide (Lys-Gly) (interchain with G-Cter in SUMO2) cross-links involve residues lysine 92 and lysine 109. Serine 118 is subject to Phosphoserine. Glycyl lysine isopeptide (Lys-Gly) (interchain with G-Cter in SUMO2) cross-links involve residues lysine 127 and lysine 132. An SP-RING-type zinc finger spans residues 156–242 (VDEDMIVTQS…LRRAIESHKK (87 aa)). Zn(2+)-binding residues include cysteine 187, histidine 189, cysteine 212, and cysteine 217.

The protein belongs to the NSE2 family. As to quaternary structure, component of the SMC5-SMC6 complex which consists at least of SMC5, SMC6, NSMCE2, NSMCE1, NSMCE4A or EID3 and NSMCE3. In terms of processing, sumoylated, possibly via autosumoylation.

It is found in the nucleus. Its subcellular location is the chromosome. It localises to the telomere. The protein resides in the PML body. Its pathway is protein modification; protein sumoylation. Its function is as follows. E3 SUMO-protein ligase component of the SMC5-SMC6 complex, a complex involved in DNA double-strand break repair by homologous recombination. Is not be required for the stability of the complex. The complex may promote sister chromatid homologous recombination by recruiting the SMC1-SMC3 cohesin complex to double-strand breaks. Acts as an E3 ligase mediating SUMO attachment to various proteins such as SMC6L1 and TSNAX, the shelterin complex subunits TERF1, TERF2, TINF2 and TERF2IP, RAD51AP1, and maybe the cohesin components RAD21 and STAG2. Required for recruitment of telomeres to PML nuclear bodies. Required for sister chromatid cohesion during prometaphase and mitotic progression. This chain is E3 SUMO-protein ligase NSE2 (NSMCE2), found in Bos taurus (Bovine).